The following is a 36-amino-acid chain: Endoglucanase Cel12A (36 aa).

Belongs to the glycosyl hydrolase 12 (cellulase H) family.

It localises to the secreted. Its subcellular location is the extracellular space. The catalysed reaction is Endohydrolysis of (1-&gt;4)-beta-D-glucosidic linkages in cellulose, lichenin and cereal beta-D-glucans.. In terms of biological role, has carboxymethylcellulase activity. This is Endoglucanase Cel12A from Gloeophyllum trabeum (Brown rot fungus).